Here is a 158-residue protein sequence, read N- to C-terminus: Glycine/sarcosine/betaine reductase complex component A1 (158 aa).

Sec46 is an active-site residue. Residue Sec46 is a non-standard amino acid, selenocysteine.

Belongs to the GrdA family. Monomer. Component of the glycine, sarcosine and betaine reductase complexes, together with components B and C.

The catalysed reaction is acetyl phosphate + [thioredoxin]-disulfide + NH4(+) + H2O = [thioredoxin]-dithiol + glycine + phosphate + H(+). It carries out the reaction acetyl phosphate + methylamine + [thioredoxin]-disulfide + H2O = sarcosine + [thioredoxin]-dithiol + phosphate + H(+). The enzyme catalyses acetyl phosphate + trimethylamine + [thioredoxin]-disulfide + H2O = glycine betaine + [thioredoxin]-dithiol + phosphate + H(+). In the first step of glycine, betaine and sarcosine reductases, the substrate is bound to component PB via a Schiff base intermediate. Then the PB-activated substrate is nucleophilically attacked by the selenol anion of component PA to transform it to a carboxymethylated selenoether and the respective amine. By action of component PC, acetyl phosphate is formed, leaving component PA in its oxidized state. Finally component PA becomes reduced by the thioredoxin system to start a new catalytic cycle of reductive deamination. The polypeptide is Glycine/sarcosine/betaine reductase complex component A1 (grdA1) (Photobacterium profundum (strain SS9)).